The sequence spans 197 residues: Imidazoleglycerol-phosphate dehydratase (197 aa).

This sequence belongs to the imidazoleglycerol-phosphate dehydratase family.

Its subcellular location is the cytoplasm. The catalysed reaction is D-erythro-1-(imidazol-4-yl)glycerol 3-phosphate = 3-(imidazol-4-yl)-2-oxopropyl phosphate + H2O. It functions in the pathway amino-acid biosynthesis; L-histidine biosynthesis; L-histidine from 5-phospho-alpha-D-ribose 1-diphosphate: step 6/9. This is Imidazoleglycerol-phosphate dehydratase from Leptospira biflexa serovar Patoc (strain Patoc 1 / Ames).